A 20-amino-acid polypeptide reads, in one-letter code: Cytolysin tenebrosin-A (20 aa).

Positions 3 to 12 are plays an important role in the hemolytic activity; sequence AVAGAVIEGA. The N-terminal region stretch occupies residues 11-20; it reads GATLTFEVLQ.

It belongs to the actinoporin family. Sea anemone subfamily. In terms of assembly, octamer or nonamer in membranes. Monomer in the soluble state.

The protein resides in the secreted. It is found in the nematocyst. The protein localises to the target cell membrane. In terms of biological role, pore-forming protein that forms cations-selective hydrophilic pores of around 1 nm and causes cardiac stimulation and cytolysis. Pore formation is a multi-step process that involves specific recognition of membrane sphingomyelin (but neither cholesterol nor phosphatidylcholine) using aromatic rich region and adjacent phosphocholine (POC) binding site, firm binding to the membrane (mainly driven by hydrophobic interactions) accompanied by the transfer of the N-terminal region to the lipid-water interface and finally pore formation after oligomerization of monomers. The protein is Cytolysin tenebrosin-A of Actinia tenebrosa (Australian red waratah sea anemone).